The following is a 368-amino-acid chain: Probable dual-specificity RNA methyltransferase RlmN (368 aa).

The active-site Proton acceptor is Glu108. Positions 114 to 345 constitute a Radical SAM core domain; the sequence is HAYGNSVCVS…VTVRRGLGAD (232 aa). Cys121 and Cys350 are disulfide-bonded. Residues Cys128, Cys132, and Cys135 each coordinate [4Fe-4S] cluster. S-adenosyl-L-methionine-binding positions include 175–176, Ser207, 230–232, and Asn307; these read GE and SLH. Residue Cys350 is the S-methylcysteine intermediate of the active site.

This sequence belongs to the radical SAM superfamily. RlmN family. [4Fe-4S] cluster serves as cofactor.

It is found in the cytoplasm. The enzyme catalyses adenosine(2503) in 23S rRNA + 2 reduced [2Fe-2S]-[ferredoxin] + 2 S-adenosyl-L-methionine = 2-methyladenosine(2503) in 23S rRNA + 5'-deoxyadenosine + L-methionine + 2 oxidized [2Fe-2S]-[ferredoxin] + S-adenosyl-L-homocysteine. It catalyses the reaction adenosine(37) in tRNA + 2 reduced [2Fe-2S]-[ferredoxin] + 2 S-adenosyl-L-methionine = 2-methyladenosine(37) in tRNA + 5'-deoxyadenosine + L-methionine + 2 oxidized [2Fe-2S]-[ferredoxin] + S-adenosyl-L-homocysteine. Its function is as follows. Specifically methylates position 2 of adenine 2503 in 23S rRNA and position 2 of adenine 37 in tRNAs. The protein is Probable dual-specificity RNA methyltransferase RlmN of Pelotomaculum thermopropionicum (strain DSM 13744 / JCM 10971 / SI).